The sequence spans 535 residues: Heat shock factor protein 2 (535 aa).

Glycyl lysine isopeptide (Lys-Gly) (interchain with G-Cter in SUMO2) cross-links involve residues Lys2, Lys82, Lys135, Lys139, Lys151, Lys210, Lys218, and Lys237. The DNA-binding element occupies 7–112 (VPAFLSKLWT…LLENIKRKVS (106 aa)). The interval 119 to 192 (NKIRQEDLTK…VTLVQNNQLV (74 aa)) is hydrophobic repeat HR-A/B. The disordered stretch occupies residues 298 to 325 (QSGEQSEPAREPLRVGSAGSSSPLMSSA). The span at 313–325 (GSAGSSSPLMSSA) shows a compositional bias: low complexity. Residues 359-384 (LLDYLDSIDCSLEDFQAMLSGRQFSI) are hydrophobic repeat HR-C. The interval 418 to 437 (TKSSVVQHVSEEGRKSKSKP) is disordered. Over residues 426 to 437 (VSEEGRKSKSKP) the composition is skewed to basic and acidic residues.

The protein belongs to the HSF family. In terms of assembly, DNA-binding homotrimer in stressed or heat shocked cells, otherwise found as a homodimer. Isoform alpha is expressed predominantly in testis while isoform beta is expressed predominantly in heart and brain.

Its subcellular location is the cytoplasm. The protein resides in the nucleus. Its function is as follows. DNA-binding protein that specifically binds heat shock promoter elements (HSE) and activates transcription. In higher eukaryotes, HSF is unable to bind to the HSE unless the cells are heat shocked. HSF2 is expressed in a form that binds DNA constitutively but loses DNA binding by incubation at greater than 41 degrees C. In Mus musculus (Mouse), this protein is Heat shock factor protein 2 (Hsf2).